A 366-amino-acid chain; its full sequence is Tetraacyldisaccharide 4'-kinase (366 aa).

51–58 provides a ligand contact to ATP; that stretch reads TVGGTGKT.

Belongs to the LpxK family.

The enzyme catalyses a lipid A disaccharide + ATP = a lipid IVA + ADP + H(+). It participates in glycolipid biosynthesis; lipid IV(A) biosynthesis; lipid IV(A) from (3R)-3-hydroxytetradecanoyl-[acyl-carrier-protein] and UDP-N-acetyl-alpha-D-glucosamine: step 6/6. Functionally, transfers the gamma-phosphate of ATP to the 4'-position of a tetraacyldisaccharide 1-phosphate intermediate (termed DS-1-P) to form tetraacyldisaccharide 1,4'-bis-phosphate (lipid IVA). This chain is Tetraacyldisaccharide 4'-kinase, found in Phocaeicola vulgatus (strain ATCC 8482 / DSM 1447 / JCM 5826 / CCUG 4940 / NBRC 14291 / NCTC 11154) (Bacteroides vulgatus).